The sequence spans 397 residues: Tryptophan synthase beta chain (397 aa).

Position 88 is an N6-(pyridoxal phosphate)lysine (lysine 88).

The protein belongs to the TrpB family. Tetramer of two alpha and two beta chains. The cofactor is pyridoxal 5'-phosphate.

The catalysed reaction is (1S,2R)-1-C-(indol-3-yl)glycerol 3-phosphate + L-serine = D-glyceraldehyde 3-phosphate + L-tryptophan + H2O. It participates in amino-acid biosynthesis; L-tryptophan biosynthesis; L-tryptophan from chorismate: step 5/5. Functionally, the beta subunit is responsible for the synthesis of L-tryptophan from indole and L-serine. The protein is Tryptophan synthase beta chain of Haemophilus influenzae (strain PittEE).